Reading from the N-terminus, the 442-residue chain is Exodeoxyribonuclease 7 large subunit (442 aa).

Residues 1 to 38 form a disordered region; the sequence is MSDSTQFSLFDSGDDEPAKVTAPKRKVARKKRSSSSSD. Basic residues predominate over residues 22–33; sequence APKRKVARKKRS.

It belongs to the XseA family. As to quaternary structure, heterooligomer composed of large and small subunits.

Its subcellular location is the cytoplasm. The catalysed reaction is Exonucleolytic cleavage in either 5'- to 3'- or 3'- to 5'-direction to yield nucleoside 5'-phosphates.. In terms of biological role, bidirectionally degrades single-stranded DNA into large acid-insoluble oligonucleotides, which are then degraded further into small acid-soluble oligonucleotides. This Rhodopirellula baltica (strain DSM 10527 / NCIMB 13988 / SH1) protein is Exodeoxyribonuclease 7 large subunit.